A 1299-amino-acid polypeptide reads, in one-letter code: DNA-directed RNA polymerase subunit beta' (1299 aa).

Positions 60, 62, 75, and 78 each coordinate Zn(2+). The tract at residues glycine 188–arginine 209 is disordered. Mg(2+) is bound by residues aspartate 535, aspartate 537, and aspartate 539. Zn(2+) is bound by residues cysteine 882, cysteine 959, cysteine 966, and cysteine 969.

The protein belongs to the RNA polymerase beta' chain family. In terms of assembly, the RNAP catalytic core consists of 2 alpha, 1 beta, 1 beta' and 1 omega subunit. When a sigma factor is associated with the core the holoenzyme is formed, which can initiate transcription. Mg(2+) serves as cofactor. Requires Zn(2+) as cofactor.

The enzyme catalyses RNA(n) + a ribonucleoside 5'-triphosphate = RNA(n+1) + diphosphate. Its function is as follows. DNA-dependent RNA polymerase catalyzes the transcription of DNA into RNA using the four ribonucleoside triphosphates as substrates. In Clavibacter michiganensis subsp. michiganensis (strain NCPPB 382), this protein is DNA-directed RNA polymerase subunit beta'.